The sequence spans 174 residues: Crossover junction endodeoxyribonuclease RuvC (174 aa).

Residues Asp-8, Glu-67, and Asp-139 contribute to the active site. Residues Asp-8, Glu-67, and Asp-139 each coordinate Mg(2+).

It belongs to the RuvC family. In terms of assembly, homodimer which binds Holliday junction (HJ) DNA. The HJ becomes 2-fold symmetrical on binding to RuvC with unstacked arms; it has a different conformation from HJ DNA in complex with RuvA. In the full resolvosome a probable DNA-RuvA(4)-RuvB(12)-RuvC(2) complex forms which resolves the HJ. Requires Mg(2+) as cofactor.

The protein resides in the cytoplasm. It catalyses the reaction Endonucleolytic cleavage at a junction such as a reciprocal single-stranded crossover between two homologous DNA duplexes (Holliday junction).. Its function is as follows. The RuvA-RuvB-RuvC complex processes Holliday junction (HJ) DNA during genetic recombination and DNA repair. Endonuclease that resolves HJ intermediates. Cleaves cruciform DNA by making single-stranded nicks across the HJ at symmetrical positions within the homologous arms, yielding a 5'-phosphate and a 3'-hydroxyl group; requires a central core of homology in the junction. The consensus cleavage sequence is 5'-(A/T)TT(C/G)-3'. Cleavage occurs on the 3'-side of the TT dinucleotide at the point of strand exchange. HJ branch migration catalyzed by RuvA-RuvB allows RuvC to scan DNA until it finds its consensus sequence, where it cleaves and resolves the cruciform DNA. This chain is Crossover junction endodeoxyribonuclease RuvC, found in Ectopseudomonas mendocina (strain ymp) (Pseudomonas mendocina).